The following is a 914-amino-acid chain: Protein translocase subunit SecA (914 aa).

ATP contacts are provided by residues glutamine 87, glycine 105–threonine 109, and aspartate 508. Residues cysteine 898, cysteine 900, cysteine 909, and histidine 910 each contribute to the Zn(2+) site.

It belongs to the SecA family. Monomer and homodimer. Part of the essential Sec protein translocation apparatus which comprises SecA, SecYEG and auxiliary proteins SecDF-YajC and YidC. Zn(2+) serves as cofactor.

The protein resides in the cell inner membrane. The protein localises to the cytoplasm. It catalyses the reaction ATP + H2O + cellular proteinSide 1 = ADP + phosphate + cellular proteinSide 2.. Its function is as follows. Part of the Sec protein translocase complex. Interacts with the SecYEG preprotein conducting channel. Has a central role in coupling the hydrolysis of ATP to the transfer of proteins into and across the cell membrane, serving both as a receptor for the preprotein-SecB complex and as an ATP-driven molecular motor driving the stepwise translocation of polypeptide chains across the membrane. This chain is Protein translocase subunit SecA, found in Xylella fastidiosa (strain M12).